The primary structure comprises 301 residues: 4-hydroxybenzoate octaprenyltransferase (301 aa).

A run of 7 helical transmembrane segments spans residues 34–54 (IGSL…AGGL), 57–77 (LWTL…GCVI), 108–128 (LWVF…LNWL), 163–183 (WGIP…AWLL), 222–242 (DLIA…LVGL), 248–268 (IAYW…FHIA), and 280–300 (FLHN…SLAL).

The protein belongs to the UbiA prenyltransferase family. The cofactor is Mg(2+).

The protein localises to the cell inner membrane. The catalysed reaction is all-trans-octaprenyl diphosphate + 4-hydroxybenzoate = 4-hydroxy-3-(all-trans-octaprenyl)benzoate + diphosphate. It participates in cofactor biosynthesis; ubiquinone biosynthesis. In terms of biological role, catalyzes the prenylation of para-hydroxybenzoate (PHB) with an all-trans polyprenyl group. Mediates the second step in the final reaction sequence of ubiquinone-8 (UQ-8) biosynthesis, which is the condensation of the polyisoprenoid side chain with PHB, generating the first membrane-bound Q intermediate 3-octaprenyl-4-hydroxybenzoate. The polypeptide is 4-hydroxybenzoate octaprenyltransferase (Xanthomonas campestris pv. campestris (strain 8004)).